We begin with the raw amino-acid sequence, 623 residues long: Frizzled and smoothened-like protein M (623 aa).

Residues 1–18 form the signal peptide; the sequence is MKSIFIIIFILYVFQVNS. The Extracellular portion of the chain corresponds to 19 to 243; it reads QTIYPIDPSG…WDQLYNLSNT (225 aa). The FZ domain maps to 25–163; sequence DPSGKCEQYI…NYSEFNLTNY (139 aa). 2 cysteine pairs are disulfide-bonded: C30-C100 and C42-C93. N-linked (GlcNAc...) asparagine glycans are attached at residues N57, N106, N109, N154, N159, N169, N199, and N239. A helical membrane pass occupies residues 244-264; it reads LAVLSTFGSLYLLVTFIILNP. Topologically, residues 265–273 are cytoplasmic; it reads KVTSFDRMY. Residues 274 to 294 form a helical membrane-spanning segment; it reads GFFNGSVFMMSLSGVILFIAG. Residues 295 to 317 are Extracellular-facing; the sequence is GPRALIKDGGARISVFEDPLCSS. The helical transmembrane segment at 318–338 threads the bilayer; sequence TGFIFQLFAINAILFWAYMGF. Topologically, residues 339–354 are cytoplasmic; it reads DLWWRVKYITKPLNIQ. The helical transmembrane segment at 355-375 threads the bilayer; the sequence is KYYVPIAFTISFIFSVIPLAT. The Extracellular segment spans residues 376–397; the sequence is KNYRMVRGNIHCWVHKAVLQNT. A helical membrane pass occupies residues 398-418; sequence LFFGPLGLTLTISTGFIGLVI. Residues 419–439 are Cytoplasmic-facing; sequence YEIYKIVKATGRGGIMKLEIK. A helical transmembrane segment spans residues 440 to 460; sequence PILNIVLIYFSFVYIFAFNFH. At 461–494 the chain is on the extracellular side; sequence NDNNSKNTYGSIDEFFQCTLESDDPSKCTVGGPS. An N-linked (GlcNAc...) asparagine glycan is attached at N463. The chain crosses the membrane as a helical span at residues 495-515; sequence IGSLGYFIYCIRIYGIYCFFL. Topologically, residues 516 to 623 are cytoplasmic; the sequence is QGLNERAFKI…DIEIGSVNIK (108 aa). The disordered stretch occupies residues 552 to 590; the sequence is PSESGNSSTTAGTSTTINNSNINKKNNNSKPTLSTMDSN. Residues 555-580 show a composition bias toward low complexity; the sequence is SGNSSTTAGTSTTINNSNINKKNNNS.

This sequence belongs to the G-protein coupled receptor Fz/Smo family.

Its subcellular location is the membrane. In Dictyostelium discoideum (Social amoeba), this protein is Frizzled and smoothened-like protein M (fslM-1).